The primary structure comprises 20 residues: Chemoheterotroph-specific protein (20 aa).

This is Chemoheterotroph-specific protein from Thiomonas delicata (Thiomonas cuprina).